The primary structure comprises 488 residues: UDP-N-acetylmuramate--L-alanine ligase (488 aa).

129–135 lines the ATP pocket; that stretch reads GTHGKTT.

This sequence belongs to the MurCDEF family.

It is found in the cytoplasm. It carries out the reaction UDP-N-acetyl-alpha-D-muramate + L-alanine + ATP = UDP-N-acetyl-alpha-D-muramoyl-L-alanine + ADP + phosphate + H(+). It participates in cell wall biogenesis; peptidoglycan biosynthesis. Functionally, cell wall formation. This Chromohalobacter salexigens (strain ATCC BAA-138 / DSM 3043 / CIP 106854 / NCIMB 13768 / 1H11) protein is UDP-N-acetylmuramate--L-alanine ligase.